We begin with the raw amino-acid sequence, 248 residues long: 5'-nucleotidase SurE (248 aa).

Asp8, Asp9, Ser39, and Asn91 together coordinate a divalent metal cation.

This sequence belongs to the SurE nucleotidase family. Requires a divalent metal cation as cofactor.

Its subcellular location is the cytoplasm. The catalysed reaction is a ribonucleoside 5'-phosphate + H2O = a ribonucleoside + phosphate. Nucleotidase that shows phosphatase activity on nucleoside 5'-monophosphates. The protein is 5'-nucleotidase SurE of Neisseria meningitidis serogroup C (strain 053442).